The following is a 122-amino-acid chain: Large ribosomal subunit protein uL14c (122 aa).

Belongs to the universal ribosomal protein uL14 family. In terms of assembly, part of the 50S ribosomal subunit.

It localises to the plastid. The protein resides in the chloroplast. Binds to 23S rRNA. This Platanus occidentalis (Sycamore) protein is Large ribosomal subunit protein uL14c.